The following is a 110-amino-acid chain: MAGWFELSKSSDSQFRFVLKAGNGETILTSELYTSKASAEKGIASVRSNSPQEERYEKKTASNGKFYFNLKAANHQIIGSSQMYATAQSRETGIASVKANGTSQTVKDNT.

2 tandem repeats follow at residues 10–58 and 61–109.

Belongs to the UPF0339 family. Duplicated subfamily.

This Escherichia coli O157:H7 protein is UPF0339 protein YegP (yegP).